Consider the following 225-residue polypeptide: MSTCLPIVERFHSLQGEGLHFGKSAFFIRLGGCKVGCPWCDTKESWSIATHQEATVEELSKEAAIAQSQGAAILVITGGEPLHHNLNALCKTIQDFTSHNSRETMPIHLETSGVDEITGLINWITLSPKRHALPKKSLLRACDEIKVVIHQKEDLLFAEEMANQSIKERQISKKTSDENHKISQPHLFLQPGWNSKEGTQLTIEYIKSHPQWRLSLQTHKWLGVL.

Residues 14 to 16 (LQG) and Arg-29 each bind substrate. Residues 20–225 (HFGKSAFFIR…LQTHKWLGVL (206 aa)) enclose the Radical SAM core domain. [4Fe-4S] cluster-binding residues include Cys-33, Cys-37, and Cys-40. Thr-42 provides a ligand contact to Mg(2+). Position 77 (Thr-77) interacts with substrate. Residues Gly-79 and 127–129 (SPK) contribute to the S-adenosyl-L-methionine site.

The protein belongs to the radical SAM superfamily. 7-carboxy-7-deazaguanine synthase family. As to quaternary structure, homodimer. [4Fe-4S] cluster is required as a cofactor. It depends on S-adenosyl-L-methionine as a cofactor. Mg(2+) serves as cofactor.

The catalysed reaction is 6-carboxy-5,6,7,8-tetrahydropterin + H(+) = 7-carboxy-7-deazaguanine + NH4(+). Its pathway is purine metabolism; 7-cyano-7-deazaguanine biosynthesis. Its function is as follows. Catalyzes the complex heterocyclic radical-mediated conversion of 6-carboxy-5,6,7,8-tetrahydropterin (CPH4) to 7-carboxy-7-deazaguanine (CDG), a step common to the biosynthetic pathways of all 7-deazapurine-containing compounds. The sequence is that of 7-carboxy-7-deazaguanine synthase from Prochlorococcus marinus (strain SARG / CCMP1375 / SS120).